We begin with the raw amino-acid sequence, 134 residues long: Small ribosomal subunit protein uS9 (134 aa).

A disordered region spans residues 97–134 (ENRQDLKSCGFLTRDPRKKERKKYGHKKARKSFQFSKR). Over residues 115–134 (KERKKYGHKKARKSFQFSKR) the composition is skewed to basic residues.

Belongs to the universal ribosomal protein uS9 family.

In Chlamydia pneumoniae (Chlamydophila pneumoniae), this protein is Small ribosomal subunit protein uS9 (rpsI).